The sequence spans 231 residues: Ribose-5-phosphate isomerase A (231 aa).

Residues 32–35 (TGST), 85–88 (DGAD), and 98–101 (KGGG) each bind substrate. The active-site Proton acceptor is E107. Residue K125 coordinates substrate.

This sequence belongs to the ribose 5-phosphate isomerase family. Homodimer.

The catalysed reaction is aldehydo-D-ribose 5-phosphate = D-ribulose 5-phosphate. Its pathway is carbohydrate degradation; pentose phosphate pathway; D-ribose 5-phosphate from D-ribulose 5-phosphate (non-oxidative stage): step 1/1. Catalyzes the reversible conversion of ribose-5-phosphate to ribulose 5-phosphate. In Burkholderia cenocepacia (strain ATCC BAA-245 / DSM 16553 / LMG 16656 / NCTC 13227 / J2315 / CF5610) (Burkholderia cepacia (strain J2315)), this protein is Ribose-5-phosphate isomerase A.